Reading from the N-terminus, the 243-residue chain is Probable fructoselysine utilization operon transcriptional repressor (243 aa).

Residues 10 to 78 (QLLYATVRQR…QGKGTFVQSQ (69 aa)) form the HTH gntR-type domain. Positions 38 to 57 (ENELCTQYNVSRITIRKAIS) form a DNA-binding region, H-T-H motif.

Its pathway is carbohydrate metabolism; fructoselysine degradation [regulation]. May regulate the transcription of the frlABCDR operon, involved in the utilization of fructoselysine and psicoselysine. In Shigella flexneri, this protein is Probable fructoselysine utilization operon transcriptional repressor (frlR).